We begin with the raw amino-acid sequence, 317 residues long: Sulfate adenylyltransferase subunit 2 (317 aa).

Over residues 1–10 (MSNAVHETDS) the composition is skewed to basic and acidic residues. 2 disordered regions span residues 1–21 (MSNA…PPLD) and 298–317 (RAID…EGYF).

It belongs to the PAPS reductase family. CysD subfamily. Heterodimer composed of CysD, the smaller subunit, and CysN.

The enzyme catalyses sulfate + ATP + H(+) = adenosine 5'-phosphosulfate + diphosphate. Its pathway is sulfur metabolism; hydrogen sulfide biosynthesis; sulfite from sulfate: step 1/3. With CysN forms the ATP sulfurylase (ATPS) that catalyzes the adenylation of sulfate producing adenosine 5'-phosphosulfate (APS) and diphosphate, the first enzymatic step in sulfur assimilation pathway. APS synthesis involves the formation of a high-energy phosphoric-sulfuric acid anhydride bond driven by GTP hydrolysis by CysN coupled to ATP hydrolysis by CysD. The sequence is that of Sulfate adenylyltransferase subunit 2 from Agrobacterium fabrum (strain C58 / ATCC 33970) (Agrobacterium tumefaciens (strain C58)).